The following is a 207-amino-acid chain: Phenazine biosynthesis protein PhzD (207 aa).

D38 serves as the catalytic Proton donor. Residues Q78, R87, K122, and 151-155 contribute to the substrate site; that span reads YAHVG.

The protein belongs to the isochorismatase family. Homodimer.

The catalysed reaction is (2S)-2-amino-4-deoxychorismate + H2O = (5S,6S)-6-amino-5-hydroxycyclohexa-1,3-diene-1-carboxyate + pyruvate. It functions in the pathway antibiotic biosynthesis; phenazine biosynthesis. In terms of biological role, involved in the biosynthesis of the antibiotic phenazine, a nitrogen-containing heterocyclic molecule having important roles in virulence, competition and biological control. Catalyzes the hydrolysis of the vinyl ether functional group of 2-amino-2-deoxyisochorismate (ADIC), yielding pyruvate and trans-2,3-dihydro-3-hydroxyanthranilic acid (DHHA). This chain is Phenazine biosynthesis protein PhzD, found in Pseudomonas fluorescens.